A 101-amino-acid polypeptide reads, in one-letter code: Apolipoprotein C-II (101 aa).

A signal peptide spans Met-1–Ala-26. The tract at residues Thr-66 to Ile-74 is lipid binding. The lipoprotein lipase cofactor stretch occupies residues Ser-78–Gln-101.

Belongs to the apolipoprotein C2 family. In terms of processing, proapolipoprotein C-II is synthesized as a sialic acid containing glycoprotein which is subsequently desialylated prior to its proteolytic processing. Post-translationally, proapolipoprotein C-II undergoes proteolytic cleavage of its N-terminal hexapeptide to generate apolipoprotein C-II. In bovine, proapolipoprotein C-II was found to be the minor form whereas apolipoprotein C-II was found to be the major form in plasma.

The protein resides in the secreted. Its function is as follows. Component of chylomicrons, very low-density lipoproteins (VLDL), low-density lipoproteins (LDL), and high-density lipoproteins (HDL) in plasma. Plays an important role in lipoprotein metabolism as an activator of lipoprotein lipase. Both proapolipoprotein C-II and apolipoprotein C-II can activate lipoprotein lipase. The chain is Apolipoprotein C-II (APOC2) from Camelus dromedarius (Dromedary).